A 331-amino-acid polypeptide reads, in one-letter code: Smad-related protein daf-14 (331 aa).

Residues 134 to 331 (WCTIFYYELT…NERPEIGSRS (198 aa)) form the MH2 domain. The segment at 168–187 (ECRMSLTSQPSSRNSKSSQI) is disordered. The segment covering 175 to 185 (SQPSSRNSKSS) has biased composition (low complexity).

In terms of assembly, interacts with R-SMAD daf-8 and co-SMAD daf-3. Interacts with daf-3 in a daf-8 dependent manner.

Its function is as follows. Probably an atypical receptor-regulated SMAD (R-SMAD) that is an intracellular signal transducer and transcriptional modulator activated by TGF-beta-like daf-7 signaling. Plays a role in TGF-beta-like daf-7 signaling in regulating entry into a developmentally arrested larval state known as dauer, in response to harsh environmental conditions; partially redundant with R-SMAD daf-8. This is Smad-related protein daf-14 from Caenorhabditis elegans.